The primary structure comprises 93 residues: UPF0521 protein A (93 aa).

Residues 2-58 are a coiled coil; that stretch reads SLKEVITSLKNDFHSINKEIDSMKENNEKQEDKIFQEIKKLKLEMELLRKDNLSFKT.

This sequence belongs to the UPF0521 family.

The sequence is that of UPF0521 protein A from Dictyostelium discoideum (Social amoeba).